The following is a 145-amino-acid chain: Large ribosomal subunit protein uL11 (145 aa).

It belongs to the universal ribosomal protein uL11 family. Part of the ribosomal stalk of the 50S ribosomal subunit. Interacts with L10 and the large rRNA to form the base of the stalk. L10 forms an elongated spine to which L12 dimers bind in a sequential fashion forming a multimeric L10(L12)X complex. In terms of processing, one or more lysine residues are methylated.

Its function is as follows. Forms part of the ribosomal stalk which helps the ribosome interact with GTP-bound translation factors. This Rickettsia typhi (strain ATCC VR-144 / Wilmington) protein is Large ribosomal subunit protein uL11.